The chain runs to 328 residues: Sialic acid-binding Ig-like lectin 15 (328 aa).

Residues 1–19 (MEKSIWLLACLAWVLPTGS) form the signal peptide. Over 20–263 (FVRTKIDTTE…RFHGASGAST (244 aa)) the chain is Extracellular. Residues 40-158 (PAQRWSMQVP…DVHDRYESRH (119 aa)) enclose the Ig-like V-type domain. 2 disulfides stabilise this stretch: cysteine 64/cysteine 142 and cysteine 95/cysteine 104. Arginine 143 serves as a coordination point for N-acetylneuraminate. Residues 168–251 (PRIVNISVLP…SLGRSEASVY (84 aa)) enclose the Ig-like C2-type domain. Asparagine 172 carries N-linked (GlcNAc...) asparagine glycosylation. Residues cysteine 187 and cysteine 237 are joined by a disulfide bond. A helical transmembrane segment spans residues 264–284 (VALLLGALGFKALLLLGVLAA). Residues 285 to 328 (RAARRRPEHLDTPDTPPRSQAQESNYENLSQMNPRSPPATMCSP) are Cytoplasmic-facing. The segment at 289–328 (RRPEHLDTPDTPPRSQAQESNYENLSQMNPRSPPATMCSP) is disordered. The span at 301 to 318 (PRSQAQESNYENLSQMNP) shows a compositional bias: polar residues.

The protein belongs to the immunoglobulin superfamily. SIGLEC (sialic acid binding Ig-like lectin) family. Interacts with TYROBP and HCST. As to expression, expressed in macrophage and/or dendritic cells of spleen and lymph nodes.

Its subcellular location is the membrane. In terms of biological role, binds sialylated glycoproteins. The sequence is that of Sialic acid-binding Ig-like lectin 15 (SIGLEC15) from Homo sapiens (Human).